A 323-amino-acid chain; its full sequence is Beta-ketoacyl-[acyl-carrier-protein] synthase III (323 aa).

Catalysis depends on residues Cys113 and His250. The interval 251–255 is ACP-binding; it reads QANKR. The active site involves Asn280.

The protein belongs to the thiolase-like superfamily. FabH family. As to quaternary structure, homodimer.

The protein localises to the cytoplasm. The catalysed reaction is malonyl-[ACP] + acetyl-CoA + H(+) = 3-oxobutanoyl-[ACP] + CO2 + CoA. The protein operates within lipid metabolism; fatty acid biosynthesis. Its function is as follows. Catalyzes the condensation reaction of fatty acid synthesis by the addition to an acyl acceptor of two carbons from malonyl-ACP. Catalyzes the first condensation reaction which initiates fatty acid synthesis and may therefore play a role in governing the total rate of fatty acid production. Possesses both acetoacetyl-ACP synthase and acetyl transacylase activities. Its substrate specificity determines the biosynthesis of branched-chain and/or straight-chain of fatty acids. The polypeptide is Beta-ketoacyl-[acyl-carrier-protein] synthase III (Chelativorans sp. (strain BNC1)).